The chain runs to 156 residues: ATP synthase subunit b (156 aa).

A helical membrane pass occupies residues Leu-7 to Leu-29.

Belongs to the ATPase B chain family. As to quaternary structure, F-type ATPases have 2 components, F(1) - the catalytic core - and F(0) - the membrane proton channel. F(1) has five subunits: alpha(3), beta(3), gamma(1), delta(1), epsilon(1). F(0) has three main subunits: a(1), b(2) and c(10-14). The alpha and beta chains form an alternating ring which encloses part of the gamma chain. F(1) is attached to F(0) by a central stalk formed by the gamma and epsilon chains, while a peripheral stalk is formed by the delta and b chains.

It localises to the cell inner membrane. In terms of biological role, f(1)F(0) ATP synthase produces ATP from ADP in the presence of a proton or sodium gradient. F-type ATPases consist of two structural domains, F(1) containing the extramembraneous catalytic core and F(0) containing the membrane proton channel, linked together by a central stalk and a peripheral stalk. During catalysis, ATP synthesis in the catalytic domain of F(1) is coupled via a rotary mechanism of the central stalk subunits to proton translocation. Component of the F(0) channel, it forms part of the peripheral stalk, linking F(1) to F(0). The sequence is that of ATP synthase subunit b from Vibrio parahaemolyticus serotype O3:K6 (strain RIMD 2210633).